Here is a 458-residue protein sequence, read N- to C-terminus: MTFRKSFDCYDFYDRAKVGEKCTQDDWDLMKIPMKAMELKQKYGLDFKGEFVPTDRDMMEKLFQAGFEMLLECGIYCTDTHRIVKYTEDEIWDAINNVQKEFTLGTGRDAVNVRKRSVGDKRKPIVQGGPTGSPISEDVFMPVHMSYALEKEVDTIVDGVMTSVRGKPPVPKSPYEVLAAKTEARLIKQACAMAGRPGMGIOGPETSLSAQGNISSDCVGGQISSDSHEVSQLNELKIDLDAIAVIAHYKGNSDIIMDEQMPIFGGYAGGIEETTIVDVATHINAFVMSSASWHLDGPVHIRWGSTNTRETLTIAGWACATISEFTDILSGNQYYPCAGPCTEMCLLEASAQSITDTASGREILSGVASAKGVVTDKTTGMEARMMGEVARATAGVEISEINKILDKLVALYEKNYANAPAGKTFQECYDVKTVTPTEEYMHVYDGARKKLEDLGLVF.

Pyrrolysine 202 is a non-standard amino acid (pyrrolysine).

It belongs to the monomethylamine methyltransferase family. In terms of assembly, can form a complex with MtmC.

It carries out the reaction Co(I)-[methylamine-specific corrinoid protein] + methylamine + H(+) = methyl-Co(III)-[methylamine-specific corrinoid protein] + NH4(+). It participates in one-carbon metabolism; methanogenesis from methylamine. Functionally, catalyzes the transfer of the methyl group from monomethylamine to the corrinoid cofactor of MtmC. This Methanosarcina acetivorans (strain ATCC 35395 / DSM 2834 / JCM 12185 / C2A) protein is Monomethylamine methyltransferase MtmB1 (mtmB1).